A 2104-amino-acid chain; its full sequence is Phenolphthiocerol synthesis polyketide synthase type I Pks15/1 (2104 aa).

The Ketosynthase family 3 (KS3) domain maps to 41-464 (TEPVAVVGIG…GTNAHVILEE (424 aa)). Active-site for beta-ketoacyl synthase activity residues include C211, H346, and H386. An acyltransferase region spans residues 571-887 (TAVVFPGQGS…GQLFSTGMSV (317 aa)). The active-site For acyltransferase activity is the S662. An N-terminal hotdog fold region spans residues 935–1057 (HALLGAVVER…GMLGVEAASS (123 aa)). The tract at residues 935-1095 (HALLGAVVER…YAYGPGFQGL (161 aa)) is dehydratase. The 273-residue stretch at 935-1207 (HALLGAVVER…TRAMSAAQLR (273 aa)) folds into the PKS/mFAS DH domain. The active-site Proton acceptor; for dehydratase activity is H967. The segment at 1069–1207 (AESVDISDGY…TRAMSAAQLR (139 aa)) is C-terminal hotdog fold. The active-site Proton donor; for dehydratase activity is the D1128. The tract at residues 1400–1705 (GTLEDLVIEP…QARHIGKVVL (306 aa)) is enoylreductase. NADP(+) is bound by residues 1530-1547 (VLIH…VQLA) and 1719-1734 (TVLI…AVLA). The interval 1718–1899 (ATVLITGATG…SVAWGLWEQS (182 aa)) is beta-ketoacyl reductase (KR). The Carrier domain maps to 2004 to 2079 (DALVGLVCLQ…AIAEYVGRQI (76 aa)). Residue S2039 is modified to O-(pantetheine 4'-phosphoryl)serine. The interval 2081–2104 (DSQATQAEEEKLPESDGEMVSVTA) is disordered.

The protein belongs to the thiolase-like superfamily. Beta-ketoacyl-ACP synthases family. It depends on pantetheine 4'-phosphate as a cofactor.

The catalysed reaction is a fatty acyl-[ACP] + malonyl-[ACP] + H(+) = a 3-oxoacyl-[ACP] + holo-[ACP] + CO2. It participates in lipid metabolism; fatty acid biosynthesis. Functionally, catalyzes the elongation by iterative transfer of p-hydroxybenzoyl group from FadD22 (pHBA-S-FAdD22) to form p-hydroxyphenylalkanoate (pHPA) intermediates during phenolphthiocerol (PPOL) biosynthesis. PPOL is an important intermediate in the biosynthesis of phenolic glycolipid (mycosid B). The polypeptide is Phenolphthiocerol synthesis polyketide synthase type I Pks15/1 (pks15/1) (Mycobacterium marinum (strain ATCC BAA-535 / M)).